Here is a 150-residue protein sequence, read N- to C-terminus: MALKSLVLLSLLVLVLLLVRVQPSLGKETAAAKFERQHMDSSTSAASSSNYCNQMMKSRNLTKDRCKPVNTFVHESLADVQAVCSQKNVACKNGQTNCYQSYSTMSITDCRETGSSKYPNCAYKTTQANKHIIVACEGNPYVPVHFDASV.

An N-terminal signal peptide occupies residues 1-26; sequence MALKSLVLLSLLVLVLLLVRVQPSLG. 2 N-linked (Glc) (glycation) lysine; in vitro glycosylation sites follow: lysine 27 and lysine 33. Residues lysine 33 and arginine 36 each coordinate substrate. The Proton acceptor role is filled by histidine 38. 4 disulfide bridges follow: cysteine 52–cysteine 110, cysteine 66–cysteine 121, cysteine 84–cysteine 136, and cysteine 91–cysteine 98. Asparagine 60 is a glycosylation site (N-linked (GlcNAc...) asparagine; partial). 2 N-linked (Glc) (glycation) lysine; in vitro glycosylation sites follow: lysine 63 and lysine 67. Residues 67–71, lysine 92, and arginine 111 each bind substrate; that span reads KPVNT. Histidine 145 functions as the Proton donor in the catalytic mechanism.

This sequence belongs to the pancreatic ribonuclease family. As to quaternary structure, interacts with and forms tight 1:1 complexes with RNH1. Dimerization of two such complexes may occur. Interaction with RNH1 inhibits this protein. Monomer. In terms of tissue distribution, pancreas.

It localises to the secreted. It carries out the reaction an [RNA] containing cytidine + H2O = an [RNA]-3'-cytidine-3'-phosphate + a 5'-hydroxy-ribonucleotide-3'-[RNA].. The enzyme catalyses an [RNA] containing uridine + H2O = an [RNA]-3'-uridine-3'-phosphate + a 5'-hydroxy-ribonucleotide-3'-[RNA].. Endonuclease that catalyzes the cleavage of RNA on the 3' side of pyrimidine nucleotides. Acts on single-stranded and double-stranded RNA. In Bos taurus (Bovine), this protein is Ribonuclease pancreatic (RNASE1).